A 101-amino-acid polypeptide reads, in one-letter code: Small ribosomal subunit protein uS14A (101 aa).

The interval 31 to 74 is disordered; sequence IRKPSTPEADRAAAQAALQRLPRDASPVRLRNRDAADGRPRGHL. Over residues 61–70 the composition is skewed to basic and acidic residues; the sequence is RNRDAADGRP.

The protein belongs to the universal ribosomal protein uS14 family. As to quaternary structure, part of the 30S ribosomal subunit. Contacts proteins S3 and S10.

In terms of biological role, binds 16S rRNA, required for the assembly of 30S particles and may also be responsible for determining the conformation of the 16S rRNA at the A site. In Nocardia farcinica (strain IFM 10152), this protein is Small ribosomal subunit protein uS14A.